Consider the following 234-residue polypeptide: Putative N-acetylmannosamine-6-phosphate 2-epimerase (234 aa).

Belongs to the NanE family.

It carries out the reaction an N-acyl-D-glucosamine 6-phosphate = an N-acyl-D-mannosamine 6-phosphate. It participates in amino-sugar metabolism; N-acetylneuraminate degradation; D-fructose 6-phosphate from N-acetylneuraminate: step 3/5. Converts N-acetylmannosamine-6-phosphate (ManNAc-6-P) to N-acetylglucosamine-6-phosphate (GlcNAc-6-P). The protein is Putative N-acetylmannosamine-6-phosphate 2-epimerase of Klebsiella pneumoniae (strain 342).